We begin with the raw amino-acid sequence, 164 residues long: Interleukin-36 beta (164 aa).

Positions 1 to 4 (MNPQ) are excised as a propeptide.

It belongs to the IL-1 family. In terms of assembly, interacts with cargo receptor TMED10; the interaction mediates the translocation from the cytoplasm into the ERGIC (endoplasmic reticulum-Golgi intermediate compartment) and thereby secretion. In terms of processing, N-terminal truncation leads to a dramatic enhancement of its activity (&gt;1000-fold). As to expression, expression at low levels in tonsil, bone marrow, heart, placenta, lung, testis and colon but not in any hematopoietic cell lines. Not detected in adipose tissue. Expressed at higher levels in psoriatic plaques than in symptomless psoriatic skin or healthy control skin. Increased levels are not detected in inflamed joint tissue.

The protein localises to the cytoplasm. The protein resides in the secreted. Functionally, cytokine that binds to and signals through the IL1RL2/IL-36R receptor which in turn activates NF-kappa-B and MAPK signaling pathways in target cells linked to a pro-inflammatory response. Part of the IL-36 signaling system that is thought to be present in epithelial barriers and to take part in local inflammatory response; similar to the IL-1 system with which it shares the coreceptor IL1RAP. Stimulates production of interleukin-6 and interleukin-8 in synovial fibrobasts, articular chondrocytes and mature adipocytes. Induces expression of a number of antimicrobial peptides including beta-defensins 4 and 103 as well as a number of matrix metalloproteases. Seems to be involved in skin inflammatory response by acting on keratinocytes, dendritic cells and indirectly on T-cells to drive tissue infiltration, cell maturation and cell proliferation. In cultured keratinocytes induces the expression of macrophage, T-cell, and neutrophil chemokines, such as CCL3, CCL4, CCL5, CCL2, CCL17, CCL22, CL20, CCL5, CCL2, CCL17, CCL22, CXCL8, CCL20 and CXCL1, and the production of pro-inflammatory cytokines such as TNF-alpha, IL-8 and IL-6. This chain is Interleukin-36 beta, found in Homo sapiens (Human).